The following is a 20-amino-acid chain: Insulin-like growth factor-binding protein 2 (20 aa).

The 19-residue stretch at 2-20 (LVFYCPKCTAERQTACPKL) folds into the IGFBP N-terminal domain.

Binds IGF2 more than IGF1. In terms of processing, N-glycosylated.

It localises to the secreted. Inhibits IGF-mediated growth and developmental rates. IGF-binding proteins prolong the half-life of the IGFs and have been shown to either inhibit or stimulate the growth promoting effects of the IGFs on cell culture. They alter the interaction of IGFs with their cell surface receptors. This chain is Insulin-like growth factor-binding protein 2 (igfbp2), found in Oncorhynchus tshawytscha (Chinook salmon).